Here is a 557-residue protein sequence, read N- to C-terminus: Kelch repeat and BTB domain-containing protein 2 (557 aa).

The BTB domain maps to 26–95 (CDVIITIGDG…LYNRHISSMN (70 aa)). The BACK domain occupies 133–223 (HKLYEMVHIP…CIDIQNLDKK (91 aa)). Kelch repeat units follow at residues 305 to 352 (EIII…VIDD), 353 to 399 (TIYA…VLDQ), and 401 to 464 (IYII…SHKD).

Interacts (via BTB domain) with host CUL3.

The protein localises to the host cytoplasm. Functionally, probable substrate-specific adapter of CUL3-containing E3 ubiquitin-protein ligases which mediate the ubiquitination and subsequent proteasomal degradation of host target proteins. This chain is Kelch repeat and BTB domain-containing protein 2 (KBTB2), found in Bos taurus (Bovine).